We begin with the raw amino-acid sequence, 522 residues long: Peptide chain release factor 3 (522 aa).

The tr-type G domain maps to 10-277 (ASRKTFAIIS…TFVDFAPAPS (268 aa)). Residues 19 to 26 (SHPDAGKT), 87 to 91 (DTPGH), and 141 to 144 (NKMD) contribute to the GTP site.

It belongs to the TRAFAC class translation factor GTPase superfamily. Classic translation factor GTPase family. PrfC subfamily.

The protein localises to the cytoplasm. In terms of biological role, increases the formation of ribosomal termination complexes and stimulates activities of RF-1 and RF-2. It binds guanine nucleotides and has strong preference for UGA stop codons. It may interact directly with the ribosome. The stimulation of RF-1 and RF-2 is significantly reduced by GTP and GDP, but not by GMP. The protein is Peptide chain release factor 3 of Listeria welshimeri serovar 6b (strain ATCC 35897 / DSM 20650 / CCUG 15529 / CIP 8149 / NCTC 11857 / SLCC 5334 / V8).